The sequence spans 237 residues: Uridylate kinase (237 aa).

ATP is bound at residue K11–G14. G53 serves as a coordination point for UMP. ATP-binding residues include G54 and R58. Residues D73 and T134–T141 each bind UMP. Positions 161, 167, and 170 each coordinate ATP.

The protein belongs to the UMP kinase family. Homohexamer.

The protein resides in the cytoplasm. It catalyses the reaction UMP + ATP = UDP + ADP. It functions in the pathway pyrimidine metabolism; CTP biosynthesis via de novo pathway; UDP from UMP (UMPK route): step 1/1. Inhibited by UTP. Functionally, catalyzes the reversible phosphorylation of UMP to UDP. In Burkholderia lata (strain ATCC 17760 / DSM 23089 / LMG 22485 / NCIMB 9086 / R18194 / 383), this protein is Uridylate kinase.